The primary structure comprises 369 residues: Dof zinc finger protein DOF2.5 (369 aa).

The segment at 80-134 (LNCPRCNSTNTKFCYYNNYSLTQPRYFCKGCRRYWTEGGSLRNVPVGGSSRKNKR) adopts a Dof-type zinc-finger fold. Zn(2+)-binding residues include cysteine 82, cysteine 85, cysteine 107, and cysteine 110. Disordered regions lie at residues 120–149 (LRNVPVGGSSRKNKRSSSSSSSNILQTIPS), 203–224 (EGNGNITHQQQPSSSSSVYGSS), 284–304 (TDHQGLGHNSNNRSEALHSDH), and 322–369 (SSSI…GSSW). The span at 214-224 (PSSSSSVYGSS) shows a compositional bias: low complexity. Residues 284-297 (TDHQGLGHNSNNRS) show a composition bias toward polar residues. Residues 342 to 362 (NNNNNNNSSPNNGYWSGMFST) are compositionally biased toward low complexity.

As to expression, expressed in the vascular system of the mother plant, but not present in the seed and embryo. In maturing siliques, found all through the funiculus connecting the placenta to the ovule, but not in the ovule.

The protein localises to the nucleus. Its function is as follows. Transcription factor specifically involved in the maternal control of seed germination. Regulates transcription by binding to a 5'-AA[AG]G-3' consensus core sequence. May ensure the activation of a component that would trigger germination as a consequence of red light perception. The chain is Dof zinc finger protein DOF2.5 (DOF2.5) from Arabidopsis thaliana (Mouse-ear cress).